A 124-amino-acid chain; its full sequence is Histone H2A (124 aa).

The span at 1 to 18 shows a compositional bias: basic residues; the sequence is MSGRGKSGKARTKAKSRS. The interval 1 to 21 is disordered; that stretch reads MSGRGKSGKARTKAKSRSSRA. An N-acetylserine modification is found at serine 2. Serine 2 is subject to Phosphoserine. Glutamine 104 is modified (N5-methylglutamine). Residue lysine 119 forms a Glycyl lysine isopeptide (Lys-Gly) (interchain with G-Cter in ubiquitin) linkage.

This sequence belongs to the histone H2A family. In terms of assembly, the nucleosome is a histone octamer containing two molecules each of H2A, H2B, H3 and H4 assembled in one H3-H4 heterotetramer and two H2A-H2B heterodimers. The octamer wraps approximately 147 bp of DNA. Post-translationally, monoubiquitination of Lys-119 gives a specific tag for epigenetic transcriptional repression. In terms of processing, phosphorylation of Ser-2 directly represses transcription.

The protein localises to the nucleus. Its subcellular location is the chromosome. In terms of biological role, core component of nucleosome. Nucleosomes wrap and compact DNA into chromatin, limiting DNA accessibility to the cellular machineries which require DNA as a template. Histones thereby play a central role in transcription regulation, DNA repair, DNA replication and chromosomal stability. DNA accessibility is regulated via a complex set of post-translational modifications of histones, also called histone code, and nucleosome remodeling. The protein is Histone H2A of Paracentrotus lividus (Common sea urchin).